The primary structure comprises 213 residues: Protein Pars_0011 (213 aa).

One can recognise an AMMECR1 domain in the interval 8 to 201 (EEGRYLVKLA…EREPNEEVYQ (194 aa)).

This is Protein Pars_0011 from Pyrobaculum arsenaticum (strain DSM 13514 / JCM 11321 / PZ6).